The following is a 370-amino-acid chain: Gibberellin 3-beta-dioxygenase 2-1 (370 aa).

Residues 205 to 306 (MTATMHLNWY…RISLGYFLGP (102 aa)) enclose the Fe2OG dioxygenase domain. Residues His-229, Asp-231, and His-287 each contribute to the Fe cation site. The active site involves Arg-297.

Belongs to the iron/ascorbate-dependent oxidoreductase family. GA3OX subfamily. Requires L-ascorbate as cofactor. It depends on Fe cation as a cofactor. As to expression, expressed in internodes, nodes and the ear of the elongating stem.

It catalyses the reaction gibberellin A20 + 2-oxoglutarate + O2 = gibberellin A1 + succinate + CO2. In terms of biological role, converts the inactive gibberellin precursors GA9 and GA20 in the bioactives gibberellins GA4 and GA1. Also accepts GA15, GA44, the 2,3-unsaturated GA5 and 2,3-dihydroGA9 as substrate. No activity with GA12, GA53, GA24, GA19 and GA25. Also possesses 2-beta-hydroxylase, 2,3-desaturase, 2,3-epoxidase and 13-hydroxylase activities. This Triticum aestivum (Wheat) protein is Gibberellin 3-beta-dioxygenase 2-1 (GA3ox2-1).